Reading from the N-terminus, the 404-residue chain is Probable thioredoxin reductase ARB_06224 (404 aa).

The signal sequence occupies residues 1–22 (MGVQRLALALIAFTSALTSVIA). Position 67–75 (67–75 (DEGIYRNGA)) interacts with FAD. A disulfide bond links cysteine 172 and cysteine 175. A glycan (N-linked (GlcNAc...) asparagine) is linked at asparagine 213. FAD is bound at residue 334-343 (DANNDGSTNG).

Belongs to the class-II pyridine nucleotide-disulfide oxidoreductase family. Homodimer. Requires FAD as cofactor.

The protein localises to the secreted. The catalysed reaction is [thioredoxin]-dithiol + NADP(+) = [thioredoxin]-disulfide + NADPH + H(+). In Arthroderma benhamiae (strain ATCC MYA-4681 / CBS 112371) (Trichophyton mentagrophytes), this protein is Probable thioredoxin reductase ARB_06224.